A 355-amino-acid polypeptide reads, in one-letter code: Cyanide hydratase (355 aa).

In terms of domain architecture, CN hydrolase spans 6–285 (YKAAAVTSEP…DGLLFVDIDL (280 aa)). E46 (proton acceptor) is an active-site residue. The active site involves K128. C163 acts as the Nucleophile in catalysis.

Belongs to the carbon-nitrogen hydrolase superfamily. Nitrilase family. Oligomer of dimers, forming left-handed helical fibers.

The enzyme catalyses formamide = hydrogen cyanide + H2O. Catalyzes the hydration of cyanide to formamide. Degradation of cyanide may be important for plant pathogenic fungi in infection of cyanogenic plants. The polypeptide is Cyanide hydratase (Gibberella zeae (strain ATCC MYA-4620 / CBS 123657 / FGSC 9075 / NRRL 31084 / PH-1) (Wheat head blight fungus)).